Reading from the N-terminus, the 491-residue chain is Keratin, type II microfibrillar, component 7C (491 aa).

Residue cysteine 1 is modified to Blocked amino end (Cys). The segment at 1–109 (CGFSTVGSGF…PNAQCVKQEE (109 aa)) is head. The region spanning 109–420 (EKEQIKCLNN…RLLEGEEQRL (312 aa)) is the IF rod domain. The segment at 110–144 (KEQIKCLNNRFAAFIDKVRFLEQQNKLLETKLQFF) is coil 1A. The interval 145–154 (QNRQCCESNL) is linker 1. Residues 155–255 (EPLFEGYIET…YQEEIRVLQA (101 aa)) form a coil 1B region. The interval 256-272 (NISDTSVIVKMDNSRDL) is linker 12. Positions 273-416 (NMDCIVAEIK…ATYRRLLEGE (144 aa)) are coil 2. The segment at 417 to 491 (EQRLCEGVGA…GGGSCSLGRC (75 aa)) is tail.

The protein belongs to the intermediate filament family.

Wool microfibrillar keratin. This Ovis aries (Sheep) protein is Keratin, type II microfibrillar, component 7C.